A 68-amino-acid chain; its full sequence is Large ribosomal subunit protein uL29 (68 aa).

Belongs to the universal ribosomal protein uL29 family.

This chain is Large ribosomal subunit protein uL29, found in Prochlorococcus marinus (strain SARG / CCMP1375 / SS120).